The primary structure comprises 461 residues: MNFDTFHNIIAGQHRSARETSSGVNPLDRSSLWPAPVATANDVEEAVRSAQEAFPAWSQKTYKQRTELLEKFADLYLAHANEFCQLIATECGRTAGNAAIEVYFAAQWLRYPSKYEISQEITEDDKKTSIVTQEPLGVVAAICPWNFPLMLALGKIAPALATGNCVILKPSPFTPYSSLKLVELAQQVFPPSVLQVLHGHDDLGPMLVKHSRIQKITFTGSTATGKQILRDAAETMKRVTLETAGNNASIILPDVNIKAVIPQLAGGLWFNAGQVCIATRRMYIHQDIFEEVVAQLAEASKDLTSSIEPIQNEMQLVRLKQALADANAAGYELLSLGKTEAAEGFFIRPTIIKNPPPDAHAVQQENFGPIVSCIKFSSLDEAIFLANNSDTGLAASVWSGDISAAKRVAAKLEAGNVYINGPPQPDPYVPFGGQKQSGLGVEYGLPGLLSFCQTKSTYVYK.

220 to 225 (GSTATG) is an NAD(+) binding site. Active-site residues include Glu-242 and Cys-276.

Belongs to the aldehyde dehydrogenase family.

The enzyme catalyses an aldehyde + NAD(+) + H2O = a carboxylate + NADH + 2 H(+). Putative aldehyde dehydrogenase; part of the gene cluster that mediates the biosynthesis of the mycotoxin fusarin C. Within the cluster, FUS1, FUS2, FUS8 and FUS9 are sufficient for fusarin production. The other FUS cluster members are not essential for fusarin C biosynthesis. The sequence is that of Putative aldehyde dehydrogenase FUS7 from Gibberella moniliformis (strain M3125 / FGSC 7600) (Maize ear and stalk rot fungus).